Reading from the N-terminus, the 174-residue chain is Gamma-crystallin C (174 aa).

Beta/gamma crystallin 'Greek key' domains are found at residues 2–40 (GKIT…RVES) and 41–83 (GCWM…CLIP). Cys-23 carries the post-translational modification S-methylcysteine. A connecting peptide region spans residues 84-87 (QTGS). Beta/gamma crystallin 'Greek key' domains follow at residues 88-128 (HRLR…HVLE) and 129-171 (GCWV…RRVV).

This sequence belongs to the beta/gamma-crystallin family. As to quaternary structure, monomer.

Functionally, crystallins are the dominant structural components of the vertebrate eye lens. This is Gamma-crystallin C (CRYGC) from Macaca mulatta (Rhesus macaque).